A 340-amino-acid polypeptide reads, in one-letter code: tRNA N6-adenosine threonylcarbamoyltransferase (340 aa).

Positions 113 and 117 each coordinate Fe cation. Substrate-binding positions include 135-139 (LVSGG), Asp-169, Gly-182, Asp-186, and Asn-274. Asp-302 contacts Fe cation.

This sequence belongs to the KAE1 / TsaD family. Requires Fe(2+) as cofactor.

The protein localises to the cytoplasm. The enzyme catalyses L-threonylcarbamoyladenylate + adenosine(37) in tRNA = N(6)-L-threonylcarbamoyladenosine(37) in tRNA + AMP + H(+). Its function is as follows. Required for the formation of a threonylcarbamoyl group on adenosine at position 37 (t(6)A37) in tRNAs that read codons beginning with adenine. Is involved in the transfer of the threonylcarbamoyl moiety of threonylcarbamoyl-AMP (TC-AMP) to the N6 group of A37, together with TsaE and TsaB. TsaD likely plays a direct catalytic role in this reaction. This Mycolicibacterium smegmatis (strain ATCC 700084 / mc(2)155) (Mycobacterium smegmatis) protein is tRNA N6-adenosine threonylcarbamoyltransferase.